The sequence spans 336 residues: Phosphoribosylformylglycinamidine cyclo-ligase (336 aa).

Belongs to the AIR synthase family.

The protein localises to the cytoplasm. It carries out the reaction 2-formamido-N(1)-(5-O-phospho-beta-D-ribosyl)acetamidine + ATP = 5-amino-1-(5-phospho-beta-D-ribosyl)imidazole + ADP + phosphate + H(+). Its pathway is purine metabolism; IMP biosynthesis via de novo pathway; 5-amino-1-(5-phospho-D-ribosyl)imidazole from N(2)-formyl-N(1)-(5-phospho-D-ribosyl)glycinamide: step 2/2. The chain is Phosphoribosylformylglycinamidine cyclo-ligase from Caldanaerobacter subterraneus subsp. tengcongensis (strain DSM 15242 / JCM 11007 / NBRC 100824 / MB4) (Thermoanaerobacter tengcongensis).